The sequence spans 755 residues: MDYFLFIALTFLLTFHVHNAQGSELPTTTTESTETSSSKIYIIHVTGPEGKMLTESEDLESWYHSFLPPTLMSSEEQPRVIYSYKNVLRGFAASLTQEELSAVEKKNGFISAHPQRVLHRQTTHTPKFLGLQQDTGVWKESNFGKGVIIGVLDSGITPGHPSFSDVGIPPPPPKWKGRCDLNVTACNNKLIGARAFNLAAEAMNGKKAEAPIDEDGHGTHTASTAAGAFVNYAEVLGNAKGTAAGMAPHAHLAIYKVCFGEDCPESDILAALDAAVEDGVDVISISLGLSEPPPFFNDSTAIGAFAAMQKGIFVSCAAGNSGPFNSSIVNAAPWILTVGASTIDRRIVATAKLGNGQEFDGESVFQPSSFTPTLLPLAYAGKNGKEESAFCANGSLDDSAFRGKVVLCERGGGIARIAKGEEVKRAGGAAMILMNDETNAFSLSADVHALPATHVSYAAGIEIKAYINSTATPTATILFKGTVIGNSLAPAVASFSSRGPNLPSPGILKPDIIGPGVNILAAWPFPLSNSTDSKLTFNIESGTSMSCPHLSGIAALLKSSHPHWSPAAIKSAIMTSADTINLGNKLIVDETLQPTDLFATGSGHVNPSRANDPGLVYDIQPDDYIPYLCGLGYSETEVGIIAHRKIKCSASIPEGELNYPSFSVELGSSKTFTRTVTNVGEAHSSYDLIVAAPQGVDVKVQPYKLNFSEVNQKETYSVTFSRTGLGNKTQEYAQGFLKWVSTKHTVRSPISVKFI.

Positions M1–A20 are cleaved as a signal peptide. The region spanning Y41–H119 is the Inhibitor I9 domain. The Peptidase S8 domain occupies F128 to N611. D153 (charge relay system) is an active-site residue. A glycan (N-linked (GlcNAc...) asparagine) is linked at N182. The Charge relay system role is filled by H217. N-linked (GlcNAc...) asparagine glycosylation is found at N297, N325, N393, N468, and N529. The 86-residue stretch at P376 to I461 folds into the PA domain. The active-site Charge relay system is the S544. N-linked (GlcNAc...) asparagine glycans are attached at residues N706 and N727.

Belongs to the peptidase S8 family.

Its subcellular location is the secreted. The protein resides in the extracellular space. It is found in the apoplast. Its function is as follows. Required for arbuscular mycorrhiza (AM) development during AM symbiosis with AM fungi (e.g. Glomeromycota intraradices). This is Subtilisin-like protease 4 from Lotus japonicus (Lotus corniculatus var. japonicus).